The following is a 313-amino-acid chain: Tetraspanning orphan receptor (313 aa).

Over 1–54 the chain is Extracellular; that stretch reads PQCESETNFHYDIPPGYKDDVLVDVNNMSPSLVSDTQKHERGSHEVKIKHFSPY. A helical transmembrane segment spans residues 55-75; that stretch reads IAVCVTTFSLAFCCFMVHAAI. Topologically, residues 76-82 are cytoplasmic; that stretch reads TRQPTHL. Residues 83-103 traverse the membrane as a helical segment; that stretch reads LPFFFIQVFDLIICLIHILGF. At 104-129 the chain is on the extracellular side; it reads MSSTSDIRLVIHTKTGPIYIKSTGLT. A helical transmembrane segment spans residues 130–150; that stretch reads FIILSISCMMLAFKAYCLGMV. Residues 151–313 lie on the Cytoplasmic side of the membrane; that stretch reads WDCYKYLMLN…NASSNAHSSC (163 aa). Disordered regions lie at residues 192–218 and 279–313; these read NNSI…YDPA and NTNT…HSSC. The span at 279–295 shows a compositional bias: low complexity; the sequence is NTNTSTTTSVISPLTTT. The span at 301–313 shows a compositional bias: polar residues; it reads QINNASSNAHSSC.

As to quaternary structure, interacts (via N-terminal extracellular domain) with human C2a. Post-translationally, phosphorylated on tyrosine residues.

The protein resides in the cell membrane. Its function is as follows. Cell surface receptor that binds to human complement C2a protein. This results in inhibition of the classical and lectin pathways of complement activation, probably due to interference with binding of C2a to C4b and interference with cleavage by C1 or MASP2 such that C3 convertase cannot be formed. This infers resistance to complement-mediated cell lysis, allowing parasite survival and infection. The protein is Tetraspanning orphan receptor of Schistosoma haematobium (Blood fluke).